A 599-amino-acid polypeptide reads, in one-letter code: Sulfite reductase [NADPH] flavoprotein alpha-component (599 aa).

The Flavodoxin-like domain maps to 64-202 (ITIISASQTG…AASEWRARVV (139 aa)). Residues 70 to 75 (SQTGNA), 117 to 120 (STQG), and 153 to 162 (LGDSSYEFFC) each bind FMN. The 215-residue stretch at 234 to 448 (DAPLAASLSV…IEHNDNFRLP (215 aa)) folds into the FAD-binding FR-type domain. FAD-binding positions include Thr322, Ala356, 386–389 (RLYS), 404–406 (TVG), Tyr410, and 419–422 (GGAS). Residues 519 to 520 (SR), 525 to 529 (KIYVQ), and Asp561 each bind NADP(+). Tyr599 contacts FAD.

It belongs to the NADPH-dependent sulphite reductase flavoprotein subunit CysJ family. The protein in the N-terminal section; belongs to the flavodoxin family. This sequence in the C-terminal section; belongs to the flavoprotein pyridine nucleotide cytochrome reductase family. As to quaternary structure, alpha(8)-beta(8). The alpha component is a flavoprotein, the beta component is a hemoprotein. FAD serves as cofactor. It depends on FMN as a cofactor.

It carries out the reaction hydrogen sulfide + 3 NADP(+) + 3 H2O = sulfite + 3 NADPH + 4 H(+). Its pathway is sulfur metabolism; hydrogen sulfide biosynthesis; hydrogen sulfide from sulfite (NADPH route): step 1/1. Functionally, component of the sulfite reductase complex that catalyzes the 6-electron reduction of sulfite to sulfide. This is one of several activities required for the biosynthesis of L-cysteine from sulfate. The flavoprotein component catalyzes the electron flow from NADPH -&gt; FAD -&gt; FMN to the hemoprotein component. The polypeptide is Sulfite reductase [NADPH] flavoprotein alpha-component (Escherichia coli O6:K15:H31 (strain 536 / UPEC)).